The chain runs to 231 residues: Cytochrome c oxidase subunit 2 (231 aa).

The Mitochondrial intermembrane portion of the chain corresponds to 1 to 14; the sequence is MAHPAQLGLQNATS. Residues 15–45 form a helical membrane-spanning segment; that stretch reads PIMEELIAFHDHALMIIFLISSLVLYIISLM. At 46–59 the chain is on the mitochondrial matrix side; the sequence is LTTKLTHTSTMNAQ. The helical transmembrane segment at 60–87 threads the bilayer; sequence EIEMVWTILPAIILIMIALPSLRILYMT. Over 88 to 231 the chain is Mitochondrial intermembrane; sequence DEFNKPYLTL…WASYLYIVSL (144 aa). Residues His-161, Cys-196, Glu-198, Cys-200, His-204, and Met-207 each coordinate Cu cation. Mg(2+) is bound at residue Glu-198.

The protein belongs to the cytochrome c oxidase subunit 2 family. Component of the cytochrome c oxidase (complex IV, CIV), a multisubunit enzyme composed of 14 subunits. The complex is composed of a catalytic core of 3 subunits MT-CO1, MT-CO2 and MT-CO3, encoded in the mitochondrial DNA, and 11 supernumerary subunits COX4I, COX5A, COX5B, COX6A, COX6B, COX6C, COX7A, COX7B, COX7C, COX8 and NDUFA4, which are encoded in the nuclear genome. The complex exists as a monomer or a dimer and forms supercomplexes (SCs) in the inner mitochondrial membrane with NADH-ubiquinone oxidoreductase (complex I, CI) and ubiquinol-cytochrome c oxidoreductase (cytochrome b-c1 complex, complex III, CIII), resulting in different assemblies (supercomplex SCI(1)III(2)IV(1) and megacomplex MCI(2)III(2)IV(2)). Found in a complex with TMEM177, COA6, COX18, COX20, SCO1 and SCO2. Interacts with TMEM177 in a COX20-dependent manner. Interacts with COX20. Interacts with COX16. It depends on Cu cation as a cofactor.

The protein resides in the mitochondrion inner membrane. The enzyme catalyses 4 Fe(II)-[cytochrome c] + O2 + 8 H(+)(in) = 4 Fe(III)-[cytochrome c] + 2 H2O + 4 H(+)(out). Component of the cytochrome c oxidase, the last enzyme in the mitochondrial electron transport chain which drives oxidative phosphorylation. The respiratory chain contains 3 multisubunit complexes succinate dehydrogenase (complex II, CII), ubiquinol-cytochrome c oxidoreductase (cytochrome b-c1 complex, complex III, CIII) and cytochrome c oxidase (complex IV, CIV), that cooperate to transfer electrons derived from NADH and succinate to molecular oxygen, creating an electrochemical gradient over the inner membrane that drives transmembrane transport and the ATP synthase. Cytochrome c oxidase is the component of the respiratory chain that catalyzes the reduction of oxygen to water. Electrons originating from reduced cytochrome c in the intermembrane space (IMS) are transferred via the dinuclear copper A center (CU(A)) of subunit 2 and heme A of subunit 1 to the active site in subunit 1, a binuclear center (BNC) formed by heme A3 and copper B (CU(B)). The BNC reduces molecular oxygen to 2 water molecules using 4 electrons from cytochrome c in the IMS and 4 protons from the mitochondrial matrix. This is Cytochrome c oxidase subunit 2 (MT-CO2) from Lagothrix lagotricha (Brown woolly monkey).